Here is a 131-residue protein sequence, read N- to C-terminus: Protein Turandot M (131 aa).

The first 23 residues, 1–23, serve as a signal peptide directing secretion; it reads MNPAIYLSCLVVFSLLLLGKVNA.

This sequence belongs to the Turandot family.

The protein resides in the secreted. A humoral factor that may play a role in stress tolerance. Requires Mekk1 expression in the fat body to regulate response to septic injury and consequent immune response. The protein is Protein Turandot M of Drosophila erecta (Fruit fly).